We begin with the raw amino-acid sequence, 431 residues long: Enolase (431 aa).

Gln-163 lines the (2R)-2-phosphoglycerate pocket. Catalysis depends on Glu-205, which acts as the Proton donor. Mg(2+)-binding residues include Asp-242, Glu-288, and Asp-315. Residues Lys-340, Arg-369, Ser-370, and Lys-391 each coordinate (2R)-2-phosphoglycerate. Catalysis depends on Lys-340, which acts as the Proton acceptor.

It belongs to the enolase family. Mg(2+) is required as a cofactor.

It localises to the cytoplasm. The protein localises to the secreted. It is found in the cell surface. It catalyses the reaction (2R)-2-phosphoglycerate = phosphoenolpyruvate + H2O. It participates in carbohydrate degradation; glycolysis; pyruvate from D-glyceraldehyde 3-phosphate: step 4/5. Its function is as follows. Catalyzes the reversible conversion of 2-phosphoglycerate (2-PG) into phosphoenolpyruvate (PEP). It is essential for the degradation of carbohydrates via glycolysis. In Bacillus cereus (strain B4264), this protein is Enolase.